We begin with the raw amino-acid sequence, 64 residues long: Conotoxin reg3.16 (64 aa).

The N-terminal stretch at 1 to 19 (MSKLGVFLTICLLLFPLTA) is a signal peptide. The propeptide occupies 20–49 (LQLDGDQPADKPAQRKLKILPKRKHWTRFT). 3 disulfide bridges follow: C50/C64, C51/C60, and C56/C63.

Belongs to the conotoxin M superfamily. Expressed by the venom duct.

The protein localises to the secreted. The sequence is that of Conotoxin reg3.16 from Conus regius (Crown cone).